The sequence spans 230 residues: Cytochrome b6-f complex iron-sulfur subunit, chloroplastic (230 aa).

The transit peptide at 1–50 (MSSTTLSPTTPSQLCSGKSGISCPSIALLVKPTRTQMTGRGNKGMKITCQ) directs the protein to the chloroplast. The helical transmembrane segment at 72–92 (LLGALSLPTAGMLVPYGSFLV) threads the bilayer. Residues 115-213 (ATEWLKTHAP…VGVEDGKVVF (99 aa)) form the Rieske domain. Residues C157, H159, C175, and H178 each contribute to the [2Fe-2S] cluster site. C162 and C177 form a disulfide bridge.

Belongs to the Rieske iron-sulfur protein family. As to quaternary structure, the 4 large subunits of the cytochrome b6-f complex are cytochrome b6, subunit IV (17 kDa polypeptide, petD), cytochrome f and the Rieske protein, while the 4 small subunits are petG, petL, petM and petN. The complex functions as a dimer. It depends on [2Fe-2S] cluster as a cofactor.

The protein resides in the plastid. The protein localises to the chloroplast thylakoid membrane. It carries out the reaction 2 oxidized [plastocyanin] + a plastoquinol + 2 H(+)(in) = 2 reduced [plastocyanin] + a plastoquinone + 4 H(+)(out). Its function is as follows. Component of the cytochrome b6-f complex, which mediates electron transfer between photosystem II (PSII) and photosystem I (PSI), cyclic electron flow around PSI, and state transitions. The polypeptide is Cytochrome b6-f complex iron-sulfur subunit, chloroplastic (petC) (Pisum sativum (Garden pea)).